The primary structure comprises 98 residues: Large ribosomal subunit protein mL53 (98 aa).

The protein belongs to the mitochondrion-specific ribosomal protein mL53 family. As to quaternary structure, component of the mitochondrial large ribosomal subunit (mt-LSU). Mature N.crassa 74S mitochondrial ribosomes consist of a small (37S) and a large (54S) subunit. The 37S small subunit contains a 16S ribosomal RNA (16S mt-rRNA) and 32 different proteins. The 54S large subunit contains a 23S rRNA (23S mt-rRNA) and 42 different proteins.

Its subcellular location is the mitochondrion. In terms of biological role, component of the mitochondrial ribosome (mitoribosome), a dedicated translation machinery responsible for the synthesis of mitochondrial genome-encoded proteins, including at least some of the essential transmembrane subunits of the mitochondrial respiratory chain. The mitoribosomes are attached to the mitochondrial inner membrane and translation products are cotranslationally integrated into the membrane. The chain is Large ribosomal subunit protein mL53 (mrpl44) from Neurospora crassa (strain ATCC 24698 / 74-OR23-1A / CBS 708.71 / DSM 1257 / FGSC 987).